The sequence spans 35 residues: MGLRPDGIIGHSLGEVARAYYNGRISQEEAILSAY.

Ser-12 is an active-site residue.

As to quaternary structure, homodimer which is arranged in a head to tail fashion. Interacts with CEACAM1; this interaction is insulin and phosphorylation-dependent; reduces fatty-acid synthase activity.

It is found in the cytoplasm. Its subcellular location is the melanosome. The enzyme catalyses acetyl-CoA + n malonyl-CoA + 2n NADPH + 2n H(+) = a long-chain fatty acid + (n+1) CoA + n CO2 + 2n NADP(+).. In terms of biological role, fatty acid synthetase catalyzes the formation of long-chain fatty acids from acetyl-CoA, malonyl-CoA and NADPH. This multifunctional protein has 7 catalytic activities as an acyl carrier protein. Functionally, this fragment is from the acyltransferase domain of the fatty acid synthetase. This is Fatty acid synthase (FASN) from Capra hircus (Goat).